The primary structure comprises 292 residues: Putative pyruvate, phosphate dikinase regulatory protein (292 aa).

Residue 155–162 (GVSRSSKT) participates in ADP binding.

The protein belongs to the pyruvate, phosphate/water dikinase regulatory protein family. PDRP subfamily.

The catalysed reaction is N(tele)-phospho-L-histidyl/L-threonyl-[pyruvate, phosphate dikinase] + ADP = N(tele)-phospho-L-histidyl/O-phospho-L-threonyl-[pyruvate, phosphate dikinase] + AMP + H(+). It carries out the reaction N(tele)-phospho-L-histidyl/O-phospho-L-threonyl-[pyruvate, phosphate dikinase] + phosphate + H(+) = N(tele)-phospho-L-histidyl/L-threonyl-[pyruvate, phosphate dikinase] + diphosphate. Functionally, bifunctional serine/threonine kinase and phosphorylase involved in the regulation of the pyruvate, phosphate dikinase (PPDK) by catalyzing its phosphorylation/dephosphorylation. This chain is Putative pyruvate, phosphate dikinase regulatory protein, found in Acidiphilium cryptum (strain JF-5).